Reading from the N-terminus, the 419-residue chain is G protein-activated inward rectifier potassium channel 4 (419 aa).

Residues 1–24 (MAGDSRNAMNQDMEIGVTPRDPKK) form a disordered region. Residues 1-86 (MAGDSRNAMN…LFTTLVDLKW (86 aa)) lie on the Cytoplasmic side of the membrane. Residue Ser-5 is modified to Phosphoserine. The helical transmembrane segment at 87 to 111 (RFNLLVFTMVYTITWLFFGFIWWLI) threads the bilayer. The Extracellular segment spans residues 112–135 (AYIRGDLDHVGDREWIPCVENLSG). The segment at residues 136–147 (FVSAFLFSIETE) is an intramembrane region (helical; Pore-forming). Positions 148-154 (TTIGYGF) form an intramembrane region, pore-forming. Positions 149–154 (TIGYGF) match the Selectivity filter motif. Topologically, residues 155 to 163 (RVITEKCPE) are extracellular. The chain crosses the membrane as a helical span at residues 164–185 (GIVLLLVQAILGSIVNAFMVGC). The Cytoplasmic segment spans residues 186–419 (MFVKISQPKK…SGSQETKDSA (234 aa)). The segment at 381–419 (PSPPLPGGCVGAELGAEAEQEGEEEPEGLSGSQETKDSA) is disordered. The segment covering 396–407 (AEAEQEGEEEPE) has biased composition (acidic residues).

The protein belongs to the inward rectifier-type potassium channel (TC 1.A.2.1) family. KCNJ5 subfamily. Associates with KCNJ3/GIRK1 or KCNJ6/GIRK2 to form a G-protein-activated heteromultimer pore-forming unit. The resulting inward current is much larger.

Its subcellular location is the membrane. The catalysed reaction is K(+)(in) = K(+)(out). Its activity is regulated as follows. Heteromultimer composed of KCNJ3/GIRK1 and KCNJ5/GIRK4 is activated by phosphatidylinositol 4,5 biphosphate (PtdIns(4,5)P2). Inward rectifier potassium channels are characterized by a greater tendency to allow potassium to flow into the cell rather than out of it. Their voltage dependence is regulated by the concentration of extracellular potassium; as external potassium is raised, the voltage range of the channel opening shifts to more positive voltages. The inward rectification is mainly due to the blockage of outward current by internal magnesium. This receptor plays a crucial role in regulating the heartbeat. Can be blocked by external barium. This potassium channel is controlled by G proteins. This is G protein-activated inward rectifier potassium channel 4 (KCNJ5) from Bos taurus (Bovine).